Consider the following 2364-residue polypeptide: Spectrin beta chain, non-erythrocytic 1 (2364 aa).

Position 2 is an N-acetylthreonine (threonine 2). The segment at 2–275 (TTTVATDYDN…IITYVVTYYH (274 aa)) is actin-binding. Residues isoleucine 14 and serine 36 each carry the phosphoserine modification. Calponin-homology (CH) domains are found at residues 54-158 (AVQK…LRFQ) and 173-278 (KSAK…HYFS). Residue lysine 90 is modified to N6-acetyllysine. A Phosphoserine modification is found at serine 228. Spectrin repeat units lie at residues 303 to 411 (MIEK…LALR), 423 to 525 (LARR…QRLE), 530 to 636 (LQKI…RLEE), 639 to 742 (RLWK…RLEE), 745 to 847 (LLHQ…ALQD), 850 to 952 (ALYK…DALL), 957 to 1060 (IQNY…SLGE), 1063 to 1166 (KLQQ…NLLS), 1170 to 1258 (AYQQ…DRHR), 1276 to 1376 (DLQK…AQRL), 1381 to 1482 (KAEL…HNLL), 1486 to 1590 (EIHQ…RLEE), 1592 to 1696 (HRAQ…KLDE), 1698 to 1801 (HRLF…TQIL), and 1805 to 1907 (YELH…RVRL). Residues serine 817, serine 825, serine 903, serine 1057, serine 1076, serine 1079, and serine 1237 each carry the phosphoserine modification. Phosphoserine is present on residues serine 1388, serine 1447, and serine 1557. Residues 1563–2093 (IRQRLADLKQ…LLEVRRQQEE (531 aa)) are interaction with ANK2. The residue at position 1805 (tyrosine 1805) is a Phosphotyrosine. Lysine 1815, lysine 1913, and lysine 1989 each carry N6-acetyllysine. Spectrin repeat units follow at residues 1914 to 2014 (FRFF…EWLR) and 2018 to 2097 (EVHQ…EERK). The segment at 2089–2196 (RQQEEEERKR…TLPARTQETP (108 aa)) is disordered. Residues serine 2102, serine 2128, and serine 2138 each carry the phosphoserine modification. Over residues 2115–2131 (SQQQWDTSKGEQVSQNG) the composition is skewed to polar residues. Polar residues predominate over residues 2145–2166 (VDTSEMVNGATEQRTSSKESSP). Threonine 2147 is modified (phosphothreonine). Phosphoserine is present on serine 2148. A mediates interaction with CAMSAP1 region spans residues 2149–2177 (EMVNGATEQRTSSKESSPIPSPTSDRKAK). Position 2159 is a phosphothreonine (threonine 2159). Phosphoserine is present on residues serine 2160, serine 2161, serine 2164, serine 2165, and serine 2169. Threonine 2171 carries the phosphothreonine modification. Serine 2172 and serine 2184 each carry phosphoserine. Polar residues predominate over residues 2184 to 2196 (SAATLPARTQETP). Phosphothreonine occurs at positions 2187 and 2195. In terms of domain architecture, PH spans 2197–2307 (SAQMEGFLNR…WIQAISSAIS (111 aa)). Residues 2309-2364 (DKHEVSASTQSTPASSRAQTLPTSVVTITSESSPGKREKDKEKDKEKRFSLFGKKK) are disordered. 2 positions are modified to phosphoserine: serine 2314 and serine 2319. Residues 2314–2341 (SASTQSTPASSRAQTLPTSVVTITSESS) show a composition bias toward polar residues. Threonine 2320 carries the post-translational modification Phosphothreonine. O-linked (GlcNAc) serine glycosylation occurs at serine 2324. The residue at position 2328 (threonine 2328) is a Phosphothreonine. Residues serine 2340 and serine 2341 each carry the phosphoserine modification. A compositionally biased stretch (basic and acidic residues) spans 2342 to 2357 (PGKREKDKEKDKEKRF).

Belongs to the spectrin family. In terms of assembly, interacts with CAMSAP1. Interacts with ANK2. Interacts with CPNE4 (via VWFA domain). Like erythrocyte spectrin, the spectrin-like proteins are capable to form dimers which can further associate to tetramers. Can form heterodimers with SPTAN1. Isoform Short cannot bind to the axonal protein fodaxin. As to expression, isoform 2 is present in brain, lung and kidney (at protein level).

Its subcellular location is the cytoplasm. The protein localises to the cytoskeleton. It localises to the myofibril. The protein resides in the sarcomere. It is found in the m line. Its subcellular location is the cytosol. The protein localises to the cell membrane. Fodrin, which seems to be involved in secretion, interacts with calmodulin in a calcium-dependent manner and is thus candidate for the calcium-dependent movement of the cytoskeleton at the membrane. Plays a critical role in central nervous system development and function. In Homo sapiens (Human), this protein is Spectrin beta chain, non-erythrocytic 1 (SPTBN1).